Here is a 277-residue protein sequence, read N- to C-terminus: Urease accessory protein UreD (277 aa).

The protein belongs to the UreD family. As to quaternary structure, ureD, UreF and UreG form a complex that acts as a GTP-hydrolysis-dependent molecular chaperone, activating the urease apoprotein by helping to assemble the nickel containing metallocenter of UreC. The UreE protein probably delivers the nickel.

The protein localises to the cytoplasm. Its function is as follows. Required for maturation of urease via the functional incorporation of the urease nickel metallocenter. The protein is Urease accessory protein UreD of Pseudomonas putida (strain GB-1).